Consider the following 369-residue polypeptide: Putative transport protein YueF (369 aa).

8 helical membrane passes run 13–33 (ILFV…FQPF), 34–54 (IVFI…YFIF), 73–93 (LIYL…GPII), 159–179 (AVFG…FILF), 213–233 (DTLA…GTAC), 234–254 (FIGY…VMAI), 271–291 (VIVG…VVVI), and 316–336 (IILL…ILAV).

Belongs to the autoinducer-2 exporter (AI-2E) (TC 2.A.86) family.

It localises to the cell membrane. The protein is Putative transport protein YueF (yueF) of Bacillus subtilis (strain 168).